A 492-amino-acid polypeptide reads, in one-letter code: Bifunctional purine biosynthesis protein PurH (492 aa).

The MGS-like domain maps to 1–144; that stretch reads MKKAILSVSN…KNYKHVTTIV (144 aa).

The protein belongs to the PurH family.

The catalysed reaction is (6R)-10-formyltetrahydrofolate + 5-amino-1-(5-phospho-beta-D-ribosyl)imidazole-4-carboxamide = 5-formamido-1-(5-phospho-D-ribosyl)imidazole-4-carboxamide + (6S)-5,6,7,8-tetrahydrofolate. It carries out the reaction IMP + H2O = 5-formamido-1-(5-phospho-D-ribosyl)imidazole-4-carboxamide. The protein operates within purine metabolism; IMP biosynthesis via de novo pathway; 5-formamido-1-(5-phospho-D-ribosyl)imidazole-4-carboxamide from 5-amino-1-(5-phospho-D-ribosyl)imidazole-4-carboxamide (10-formyl THF route): step 1/1. Its pathway is purine metabolism; IMP biosynthesis via de novo pathway; IMP from 5-formamido-1-(5-phospho-D-ribosyl)imidazole-4-carboxamide: step 1/1. This chain is Bifunctional purine biosynthesis protein PurH, found in Staphylococcus aureus (strain JH1).